Consider the following 397-residue polypeptide: DnaJ homolog subfamily A member 1 (397 aa).

The J domain maps to 6 to 68; the sequence is TYYDVLGVKP…KKRELYDKGG (63 aa). The residue at position 66 (Lys66) is an N6-acetyllysine. Ser83 is subject to Phosphoserine. The CR-type zinc-finger motif lies at 121-205; sequence GATRKLALQK…CNGRKIVREK (85 aa). Cys134, Cys137, Cys150, Cys153, Cys177, Cys180, Cys193, and Cys196 together coordinate Zn(2+). CXXCXGXG motif repeat units follow at residues 134-141, 150-157, 177-184, and 193-200; these read CDKCEGRG, CPNCRGTG, CMECQGHG, and CKSCNGRK. A Phosphoserine modification is found at Ser335. The interval 352 to 397 is disordered; that stretch reads VEETDEMDQVELVDFDPNQERRRHYNGEAYEDDEHHPRGGVQCQTS. A compositionally biased stretch (acidic residues) spans 353–365; it reads EETDEMDQVELVD. At Tyr381 the chain carries Phosphotyrosine. Cys394 is subject to Cysteine methyl ester. Cys394 carries the S-farnesyl cysteine lipid modification. Positions 395 to 397 are cleaved as a propeptide — removed in mature form; it reads QTS.

As to quaternary structure, identified in a complex with HSPA1B and BAX. Interacts with RNF207.

It localises to the membrane. Its subcellular location is the cytoplasm. It is found in the microsome. The protein localises to the mitochondrion. The protein resides in the nucleus. It localises to the perinuclear region. Co-chaperone for HSPA8/Hsc70. Plays a role in protein transport into mitochondria via its role as co-chaperone. Functions as co-chaperone for HSPA1B and negatively regulates the translocation of BAX from the cytosol to mitochondria in response to cellular stress, thereby protecting cells against apoptosis. Stimulates ATP hydrolysis, but not the folding of unfolded proteins mediated by HSPA1A (in vitro). Promotes apoptosis in response to cellular stress mediated by exposure to anisomycin or UV. The sequence is that of DnaJ homolog subfamily A member 1 (DNAJA1) from Bos taurus (Bovine).